A 249-amino-acid chain; its full sequence is Major phosphate-irrepressible acid phosphatase (249 aa).

Positions 1 to 20 are cleaved as a signal peptide; the sequence is MKKNIIAGCLFSLFSLSALA.

The protein belongs to the class A bacterial acid phosphatase family. In terms of assembly, homotetramer.

The protein localises to the periplasm. It carries out the reaction a phosphate monoester + H2O = an alcohol + phosphate. The chain is Major phosphate-irrepressible acid phosphatase (phoC) from Morganella morganii (Proteus morganii).